A 347-amino-acid chain; its full sequence is NADH-ubiquinone oxidoreductase chain 2 (347 aa).

Transmembrane regions (helical) follow at residues 3–23, 59–79, 95–115, 127–147, 149–169, 178–198, 200–220, 241–261, 274–294, and 325–345; these read PLTLIIIMFTLFMGTMITVFS, YFLTQATASMILMMAITLNIL, PVLITLALIIKLGMAPFHFWV, GLILLTWQKLAPLSILYQISP, INPTMMMSVAILSIMVGGWGG, ILAYSSIAHMGWMAAIITFNP, TMVLNLIIYILMTIPMFMMFM, VSTILITLMSLGGLPPLTGFI, GNIILPTAMAMLALLNLYFYM, and LITPLIILSTMLLPLTPALSV.

This sequence belongs to the complex I subunit 2 family. As to quaternary structure, core subunit of respiratory chain NADH dehydrogenase (Complex I) which is composed of 45 different subunits. Interacts with TMEM242.

The protein resides in the mitochondrion inner membrane. The enzyme catalyses a ubiquinone + NADH + 5 H(+)(in) = a ubiquinol + NAD(+) + 4 H(+)(out). In terms of biological role, core subunit of the mitochondrial membrane respiratory chain NADH dehydrogenase (Complex I) which catalyzes electron transfer from NADH through the respiratory chain, using ubiquinone as an electron acceptor. Essential for the catalytic activity and assembly of complex I. This is NADH-ubiquinone oxidoreductase chain 2 from Oryctolagus cuniculus (Rabbit).